A 97-amino-acid polypeptide reads, in one-letter code: Aspartyl/glutamyl-tRNA(Asn/Gln) amidotransferase subunit C (97 aa).

It belongs to the GatC family. Heterotrimer of A, B and C subunits.

It catalyses the reaction L-glutamyl-tRNA(Gln) + L-glutamine + ATP + H2O = L-glutaminyl-tRNA(Gln) + L-glutamate + ADP + phosphate + H(+). The enzyme catalyses L-aspartyl-tRNA(Asn) + L-glutamine + ATP + H2O = L-asparaginyl-tRNA(Asn) + L-glutamate + ADP + phosphate + 2 H(+). Functionally, allows the formation of correctly charged Asn-tRNA(Asn) or Gln-tRNA(Gln) through the transamidation of misacylated Asp-tRNA(Asn) or Glu-tRNA(Gln) in organisms which lack either or both of asparaginyl-tRNA or glutaminyl-tRNA synthetases. The reaction takes place in the presence of glutamine and ATP through an activated phospho-Asp-tRNA(Asn) or phospho-Glu-tRNA(Gln). This chain is Aspartyl/glutamyl-tRNA(Asn/Gln) amidotransferase subunit C, found in Nostoc punctiforme (strain ATCC 29133 / PCC 73102).